The chain runs to 657 residues: Acetyl-coenzyme A synthetase (657 aa).

CoA is bound by residues 192-195 and Thr-311; that span reads RRGK. ATP contacts are provided by residues 387–389, 411–416, Asp-504, Arg-519, and Arg-530; these read GEP and DTWWQT. Residues His-543 and Val-546 each coordinate Mg(2+). Arg-592 is a binding site for CoA. Lys-617 is subject to N6-acetyllysine.

Belongs to the ATP-dependent AMP-binding enzyme family. Requires Mg(2+) as cofactor. Acetylated. Deacetylation by the SIR2-homolog deacetylase activates the enzyme.

The enzyme catalyses acetate + ATP + CoA = acetyl-CoA + AMP + diphosphate. Its function is as follows. Catalyzes the conversion of acetate into acetyl-CoA (AcCoA), an essential intermediate at the junction of anabolic and catabolic pathways. AcsA undergoes a two-step reaction. In the first half reaction, AcsA combines acetate with ATP to form acetyl-adenylate (AcAMP) intermediate. In the second half reaction, it can then transfer the acetyl group from AcAMP to the sulfhydryl group of CoA, forming the product AcCoA. This is Acetyl-coenzyme A synthetase from Campylobacter jejuni subsp. jejuni serotype O:6 (strain 81116 / NCTC 11828).